The chain runs to 309 residues: Foldase protein PrsA 2 (309 aa).

The signal sequence occupies residues 1 to 22 (MKQMNKLITGVVTLATVVTLSA). The N-palmitoyl cysteine moiety is linked to residue cysteine 23. Cysteine 23 carries S-diacylglycerol cysteine lipidation. The PpiC domain maps to 146-241 (TPTMTAEIMQ…RTYHIIKVTK (96 aa)).

Belongs to the PrsA family.

Its subcellular location is the cell membrane. It catalyses the reaction [protein]-peptidylproline (omega=180) = [protein]-peptidylproline (omega=0). In terms of biological role, plays a major role in protein secretion by helping the post-translocational extracellular folding of several secreted proteins. This chain is Foldase protein PrsA 2 (prsA2), found in Streptococcus pyogenes serotype M1.